Consider the following 295-residue polypeptide: Deoxyuridine 5'-triphosphate nucleotidohydrolase (295 aa).

178–180 (RSG) serves as a coordination point for substrate. A compositionally biased stretch (basic and acidic residues) spans 260 to 272 (NSVRKHTHEDNPV). Residues 260 to 295 (NSVRKHTHEDNPVHEPNVATASADIRGTKGLGSSGF) form a disordered region.

This sequence belongs to the dUTPase family. Mg(2+) serves as cofactor.

It carries out the reaction dUTP + H2O = dUMP + diphosphate + H(+). In terms of biological role, involved in nucleotide metabolism: produces dUMP, the immediate precursor of thymidine nucleotides and decreases the intracellular concentration of dUTP to avoid uracil incorporation into viral DNA. The protein is Deoxyuridine 5'-triphosphate nucleotidohydrolase of Human herpesvirus 8 type P (isolate GK18) (HHV-8).